The chain runs to 282 residues: Probable transcription factor At1g66420 (282 aa).

The interval 33–73 (SKKNEEFCGGSGKVQPSEMKRRSEGTSTDMTSKRAKKVSAE) is disordered.

Belongs to the GeBP family.

This is Probable transcription factor At1g66420 from Arabidopsis thaliana (Mouse-ear cress).